A 205-amino-acid chain; its full sequence is Protein N-terminal glutamine amidohydrolase (205 aa).

Residues C20, H74, and D90 contribute to the active site.

The protein belongs to the NTAQ1 family. In terms of assembly, monomer.

The enzyme catalyses N-terminal L-glutaminyl-[protein] + H2O = N-terminal L-glutamyl-[protein] + NH4(+). Functionally, mediates the side-chain deamidation of N-terminal glutamine residues to glutamate, an important step in N-end rule pathway of protein degradation. Conversion of the resulting N-terminal glutamine to glutamate renders the protein susceptible to arginylation, polyubiquitination and degradation as specified by the N-end rule. Does not act on substrates with internal or C-terminal glutamine and does not act on non-glutamine residues in any position. This chain is Protein N-terminal glutamine amidohydrolase (tun), found in Drosophila grimshawi (Hawaiian fruit fly).